A 222-amino-acid polypeptide reads, in one-letter code: Thymidylate kinase (222 aa).

ATP contacts are provided by residues 29-34 (RVGKST) and Arg111. The segment at 146–170 (LSMSSEDATKRGEYGGERYEKLEFQ) is LID.

Belongs to the thymidylate kinase family. Homodimer. Mg(2+) is required as a cofactor.

It catalyses the reaction dTMP + ATP = dTDP + ADP. The protein operates within pyrimidine metabolism; dTTP biosynthesis. Functionally, catalyzes the phosphorylation of thymidine monophosphate (dTMP) to thymidine diphosphate (dTDP), the immediate precursor for the DNA building block dTTP, with ATP as the preferred phosphoryl donor in the presence of Mg(2+). The protein is Thymidylate kinase (dtymk) of Dictyostelium discoideum (Social amoeba).